Reading from the N-terminus, the 773-residue chain is Mitogen-activated protein kinase kinase kinase 9 (773 aa).

Over residues 1–14 the composition is skewed to basic and acidic residues; the sequence is MKKSSDKSPVRQHD. A disordered region spans residues 1 to 35; that stretch reads MKKSSDKSPVRQHDTATQINSDAVSSSTSFTDSDS. Residues 21 to 35 are compositionally biased toward low complexity; that stretch reads SDAVSSSTSFTDSDS. Ser-79 and Ser-150 each carry phosphoserine. Positions 100 to 493 are regulatory region; sequence FDKILALMKK…VSNTSPICVS (394 aa). Ser-365 bears the Phosphoserine; by MAPK4 mark. A disordered region spans residues 426–455; it reads EIVRRPSSSSSSENGCDEEEAEDDKVEKEE. Residues 440–449 show a composition bias toward acidic residues; sequence GCDEEEAEDD. The region spanning 501–755 is the Protein kinase domain; sequence WQKGQLLRQG…ATELLNHPFV (255 aa). ATP contacts are provided by residues 507 to 515 and Lys-529; that span reads LRQGSFGSV. Residue Asp-624 is the Proton acceptor of the active site. A Phosphoserine modification is found at Ser-768.

Belongs to the protein kinase superfamily. STE Ser/Thr protein kinase family. MAP kinase kinase kinase subfamily. In terms of assembly, interacts with MPK4. Phosphorylated by MPK4 upon treatment with flg22. In terms of tissue distribution, expressed at least in rosette leaves (at protein level).

It catalyses the reaction L-seryl-[protein] + ATP = O-phospho-L-seryl-[protein] + ADP + H(+). The catalysed reaction is L-threonyl-[protein] + ATP = O-phospho-L-threonyl-[protein] + ADP + H(+). Functionally, triggers SUMM2-mediated immune responses, including cell death and defense responses. Probably inhibited by the MEKK1-MKK1/ MKK2-MPK4 kinase cascade to adjust plant defense. Seems to contribute in transducing external glutamate (L-Glu) signal that elicits large-scale changes in root architecture. The chain is Mitogen-activated protein kinase kinase kinase 9 from Arabidopsis thaliana (Mouse-ear cress).